The sequence spans 264 residues: Glutamate racemase (264 aa).

Residues 12–13 (DS) and 44–45 (YG) each bind substrate. Catalysis depends on C76, which acts as the Proton donor/acceptor. 77 to 78 (NT) provides a ligand contact to substrate. C186 (proton donor/acceptor) is an active-site residue. Residue 187–188 (TH) participates in substrate binding.

The protein belongs to the aspartate/glutamate racemases family.

The catalysed reaction is L-glutamate = D-glutamate. It functions in the pathway cell wall biogenesis; peptidoglycan biosynthesis. In terms of biological role, provides the (R)-glutamate required for cell wall biosynthesis. In Fusobacterium nucleatum subsp. nucleatum (strain ATCC 25586 / DSM 15643 / BCRC 10681 / CIP 101130 / JCM 8532 / KCTC 2640 / LMG 13131 / VPI 4355), this protein is Glutamate racemase.